The primary structure comprises 1939 residues: Myosin-4 (1939 aa).

In terms of domain architecture, Myosin N-terminal SH3-like spans 33–82 (DAKSSVFVVDAKESYVKATVQSREGGKVTAKTEGGATVTVKDDQVFSMNP). Phosphoserine is present on Ser-36. 2 positions are modified to phosphothreonine: Thr-64 and Thr-69. Ser-79 carries the post-translational modification Phosphoserine. The Myosin motor domain occupies 86 to 782 (DKIEDMAMMT…LLGTLEEMRD (697 aa)). The residue at position 130 (Lys-130) is an N6,N6,N6-trimethyllysine. An ATP-binding site is contributed by 179–186 (GESGAGKT). Tyr-389 is modified (phosphotyrosine). Residue Thr-391 is modified to Phosphothreonine. At Ser-392 the chain carries Phosphoserine. Phosphothreonine is present on Thr-419. At Tyr-424 the chain carries Phosphotyrosine. At Ser-625 the chain carries Phosphoserine. An actin-binding region spans residues 659 to 681 (LNKLMTNLKSTHPHFVRCLIPNE). Position 757 is a pros-methylhistidine (His-757). The segment at 761–775 (KFGHTKVFFKAGLLG) is actin-binding. Thr-776 carries the phosphothreonine modification. The 30-residue stretch at 785-814 (LAQLITRTQAVCRGYLMRVEFKKMMERRES) folds into the IQ domain. The stretch at 843 to 1939 (LLKSAETEKE…EVHTKVISEE (1097 aa)) forms a coiled coil. Ser-1092 and Ser-1096 each carry phosphoserine. 2 disordered regions span residues 1128 to 1147 (AERA…SREL) and 1153 to 1172 (RLEE…KKRE). Ser-1162 and Ser-1237 each carry phosphoserine. Residue Thr-1241 is modified to Phosphothreonine. Ser-1243 carries the phosphoserine modification. Position 1255 is a phosphothreonine (Thr-1255). Ser-1261 is modified (phosphoserine). Thr-1265 bears the Phosphothreonine mark. Residues 1276–1299 (ELSTQKARLHTESGEFSRQLDEKD) are disordered. Ser-1278 is subject to Phosphoserine. Positions 1284–1299 (LHTESGEFSRQLDEKD) are enriched in basic and acidic residues. Thr-1286 carries the phosphothreonine modification. Phosphoserine occurs at positions 1288, 1292, 1303, 1306, and 1413. Tyr-1464 is subject to Phosphotyrosine. Phosphothreonine is present on Thr-1467. The residue at position 1474 (Ser-1474) is a Phosphoserine. A Phosphotyrosine modification is found at Tyr-1492. Position 1495 is a phosphoserine (Ser-1495). Thr-1501 carries the post-translational modification Phosphothreonine. Phosphoserine is present on Ser-1514. The residue at position 1517 (Thr-1517) is a Phosphothreonine. A phosphoserine mark is found at Ser-1542, Ser-1547, Ser-1554, Ser-1574, Ser-1600, Ser-1603, Ser-1714, and Ser-1726. A phosphothreonine mark is found at Thr-1730 and Thr-1736. Residue Ser-1739 is modified to Phosphoserine.

It belongs to the TRAFAC class myosin-kinesin ATPase superfamily. Myosin family. As to quaternary structure, muscle myosin is a hexameric protein that consists of 2 heavy chain subunits (MHC), 2 alkali light chain subunits (MLC) and 2 regulatory light chain subunits (MLC-2). As to expression, expressed in type 2b myofibers in the tibialis anterior muscle (at protein level).

It localises to the cytoplasm. The protein resides in the myofibril. Muscle contraction. The sequence is that of Myosin-4 (Myh4) from Mus musculus (Mouse).